The primary structure comprises 964 residues: Syndetin (964 aa).

At M1 the chain carries N-acetylmethionine. Residues M1 to A25 are disordered. S15 bears the Phosphoserine mark. 2 coiled-coil regions span residues L81–L107 and Y216–I244. Residues S494, S498, S559, and S561 each carry the phosphoserine modification. The tract at residues D532–V563 is disordered. Residue K963 forms a Glycyl lysine isopeptide (Lys-Gly) (interchain with G-Cter in SUMO1); alternate linkage. A Glycyl lysine isopeptide (Lys-Gly) (interchain with G-Cter in SUMO2); alternate cross-link involves residue K963.

It belongs to the syndetin family. In terms of assembly, component of the endosome-associated retrograde protein (EARP) complex, composed of VPS51, VPS52, VPS53 and VPS50/Syndetin. The EARP complex interacts with EIPR1. Interacts with VPS51 and VPS53 in an EIPR1-independent manner. As to expression, expressed in the brain (at protein level).

Its subcellular location is the recycling endosome. The protein resides in the membrane. In terms of biological role, acts as a component of the EARP complex that is involved in endocytic recycling. The EARP complex associates with Rab4-positive endosomes and promotes recycling of internalized transferrin receptor (TFRC) to the plasma membrane. Within the EARP complex, required to tether the complex to recycling endosomes. Not involved in retrograde transport from early and late endosomes to the trans-Golgi network (TGN). This is Syndetin from Rattus norvegicus (Rat).